A 433-amino-acid chain; its full sequence is 3-phosphoshikimate 1-carboxyvinyltransferase (433 aa).

Lys-15, Ser-16, and Arg-20 together coordinate 3-phosphoshikimate. Phosphoenolpyruvate is bound at residue Lys-15. Positions 96 and 124 each coordinate phosphoenolpyruvate. Residues Ser-169, Gln-171, Ser-195, Asp-318, and Lys-345 each contribute to the 3-phosphoshikimate site. Gln-171 is a phosphoenolpyruvate binding site. The Proton acceptor role is filled by Asp-318. Phosphoenolpyruvate-binding residues include Arg-349 and Arg-393.

The protein belongs to the EPSP synthase family. In terms of assembly, monomer.

Its subcellular location is the cytoplasm. The enzyme catalyses 3-phosphoshikimate + phosphoenolpyruvate = 5-O-(1-carboxyvinyl)-3-phosphoshikimate + phosphate. Its pathway is metabolic intermediate biosynthesis; chorismate biosynthesis; chorismate from D-erythrose 4-phosphate and phosphoenolpyruvate: step 6/7. Functionally, catalyzes the transfer of the enolpyruvyl moiety of phosphoenolpyruvate (PEP) to the 5-hydroxyl of shikimate-3-phosphate (S3P) to produce enolpyruvyl shikimate-3-phosphate and inorganic phosphate. The chain is 3-phosphoshikimate 1-carboxyvinyltransferase from Chlorobium luteolum (strain DSM 273 / BCRC 81028 / 2530) (Pelodictyon luteolum).